Consider the following 124-residue polypeptide: UPF0231 protein SO_3983 (124 aa).

This sequence belongs to the UPF0231 family.

The polypeptide is UPF0231 protein SO_3983 (Shewanella oneidensis (strain ATCC 700550 / JCM 31522 / CIP 106686 / LMG 19005 / NCIMB 14063 / MR-1)).